We begin with the raw amino-acid sequence, 683 residues long: MADIKTGIFAKNVQKRLNRAQEKVLQKLGKADETKDEQFEEYVQNFKRQEAEGTRLQRELRGYLAAIKGMQEASMKLTESLHEVYEPDWYGREDVKMVGEKCDVLWEDFHQKLVDGSLLTLDTYLGQFPDIKNRIAKRSRKLVDYDSARHHLEALQSSKRKDESRISKAEEEFQKAQKVFEEFNVDLQEELPSLWSRRVGFYVNTFKNVSSLEAKFHKEIAVLCHKLYEVMTKLGDQHADKAFSIQGAPSDSGPLRIAKTPSPPEEASPLPSPTASPNHTLAPASPAPVRPRSPSQTRKGPPVPPLPKVTPTKELQQENIINFFEDNFVPEINVTTPSQNEVLEVKKEETLLDLDFDPFKPDVTPAGSAAATHSPMSQTLPWDLWTTSTDLVQPASGGSFNDFTQPQDTSLFTMQTDQNMAETEQALPTEPQAEEPPTTAAAPTAGLDLGLEMEEPKEEAAIPPGTDAGETVGTEGSTGEEAEAEKAALPAGEGESPEGAKIDVESTELASSESPQAAELEAGAPQEKVIPSVVIEPASNHEGEEHQETTTGTETREATEDVAPQGPAGEKQELATEPTPLDSQAATPAPAGAVDASLSAGDAAQELPPGFLYKVETLHDFEAANSDELTLQRGDVVLVVPSDSEADQDAGWLVGVKESDWLQYRDLATYKGLFPENFTRHLE.

Coiled coils occupy residues 10–83 (AKNV…SLHE) and 144–191 (DYDS…QEEL). The BAR domain maps to 24 to 240 (VLQKLGKADE…MTKLGDQHAD (217 aa)). Disordered regions lie at residues 244–311 (SIQG…KVTP), 421–443 (AETE…AAAP), and 455–599 (EPKE…ASLS). S252 is modified (phosphoserine). Residue T260 is modified to Phosphothreonine. Residues 261–274 (PSPPEEASPLPSPT) show a composition bias toward pro residues. Residues S262, S268, S272, and S276 each carry the phosphoserine modification. T280 bears the Phosphothreonine mark. Low complexity-rich tracts occupy residues 424–443 (EQAL…AAAP) and 468–477 (AGETVGTEGS). Phosphoserine is present on S496. Positions 539–559 (SNHEGEEHQETTTGTETREAT) are enriched in basic and acidic residues. Residues 585–596 (AATPAPAGAVDA) show a composition bias toward low complexity. In terms of domain architecture, SH3 spans 610–683 (GFLYKVETLH…FPENFTRHLE (74 aa)). S626 is subject to Phosphoserine.

Heterodimer with BIN1. Binds SH3GLB1. Interacts with REPS1 and SGIP1. Binds AP2A2. Interacts with AP2B1. Interacts with DNM1 and SYNJ1.

Its subcellular location is the cytoplasmic vesicle. It localises to the secretory vesicle. The protein localises to the synaptic vesicle membrane. The protein resides in the cytoplasm. It is found in the cytoskeleton. In terms of biological role, may participate in mechanisms of regulated exocytosis in synapses and certain endocrine cell types. May control the properties of the membrane associated cytoskeleton. This is Amphiphysin (Amph) from Rattus norvegicus (Rat).